The chain runs to 866 residues: Replication factor C small subunit (866 aa).

One can recognise a DOD-type homing endonuclease domain in the interval 183 to 313 (WLGYFIGDGH…VTYALAGFGI (131 aa)).

This sequence belongs to the activator 1 small subunits family. RfcS subfamily. As to quaternary structure, heteromultimer composed of small subunits (RfcS) and large subunits (RfcL). Post-translationally, this protein undergoes a protein self splicing that involves a post-translational excision of the intervening region (intein) followed by peptide ligation.

In terms of biological role, part of the RFC clamp loader complex which loads the PCNA sliding clamp onto DNA. The sequence is that of Replication factor C small subunit (rfcS) from Thermococcus kodakarensis (strain ATCC BAA-918 / JCM 12380 / KOD1) (Pyrococcus kodakaraensis (strain KOD1)).